Reading from the N-terminus, the 244-residue chain is Inner kinetochore subunit fta7 (244 aa).

This sequence belongs to the CENP-Q/OKP1 family. In terms of assembly, component of the heterotetrameric kinetochore subcomplex COMA, which consists of fta2, fta7, mal2 and mis17. The COMA subcomplex is part of a larger constitutive centromere-associated network (CCAN) (also known as central kinetochore Sim4 complex in fission yeast), which is composed of at least cnl2, cnp3, cnp20, fta1, fta2, fta3, fta4, fta6, fta7, mal2, mhf1, mhf2, mis6, mis15, mis17, sim4 and wip1.

The protein localises to the nucleus. It is found in the chromosome. It localises to the centromere. The protein resides in the kinetochore. Its subcellular location is the cytoplasm. The protein localises to the cytoskeleton. It is found in the microtubule organizing center. It localises to the spindle pole body. Its function is as follows. Component of the kinetochore, a multiprotein complex that assembles on centromeric DNA and attaches chromosomes to spindle microtubules, mediating chromosome segregation and sister chromatid segregation during meiosis and mitosis. Component of the inner kinetochore COMA complex, which connects centromere-associated proteins and the outer kinetochore. COMA interacts with other inner kinetochore proteins to form the inner kinetochore constitutive centromere-associated network (CCAN), which serves as a structural platform for outer kinetochore assembly. This chain is Inner kinetochore subunit fta7 (fta7), found in Schizosaccharomyces pombe (strain 972 / ATCC 24843) (Fission yeast).